Consider the following 227-residue polypeptide: Phosphoglycolate phosphatase (227 aa).

Asp-8 serves as the catalytic Nucleophile. 2 residues coordinate Mg(2+): Asp-8 and Asp-10. Lys-152 is a binding site for substrate. Residues Asp-175 and Asp-179 each coordinate Mg(2+).

The protein belongs to the archaeal SPP-like hydrolase family. The cofactor is Mg(2+).

It carries out the reaction 2-phosphoglycolate + H2O = glycolate + phosphate. In terms of biological role, catalyzes the dephosphorylation of 2-phosphoglycolate. This is Phosphoglycolate phosphatase from Halorubrum lacusprofundi (strain ATCC 49239 / DSM 5036 / JCM 8891 / ACAM 34).